Consider the following 188-residue polypeptide: MMTIQQQLETVLGDLQKAKPLSSKHLLVIGVSTSEVAGKQIGTNSSKDVAAALYAALFSYQQKTGVALAFQCCEHLNRALVMERDEAEARGYEEVAVIPVRKAGGAMATYAFTQFRDPVIVEQIRADAGIDIGDTFIGMHLKRVAVPVRSSISAIGDAHVTMAYSRPKLIGGVRANYERTEEHESFRC.

It belongs to the UPF0340 family.

The polypeptide is UPF0340 protein BH3766 (Halalkalibacterium halodurans (strain ATCC BAA-125 / DSM 18197 / FERM 7344 / JCM 9153 / C-125) (Bacillus halodurans)).